We begin with the raw amino-acid sequence, 568 residues long: Arginine--tRNA ligase (568 aa).

Residues 129–139 carry the 'HIGH' region motif; it reads ANPTGPLHIGH.

This sequence belongs to the class-I aminoacyl-tRNA synthetase family. Monomer.

Its subcellular location is the cytoplasm. The enzyme catalyses tRNA(Arg) + L-arginine + ATP = L-arginyl-tRNA(Arg) + AMP + diphosphate. The polypeptide is Arginine--tRNA ligase (Wolbachia pipientis wMel).